The chain runs to 120 residues: Aspartate 1-decarboxylase (120 aa).

Ser-25 serves as the catalytic Schiff-base intermediate with substrate; via pyruvic acid. Pyruvic acid (Ser) is present on Ser-25. Residue Thr-57 participates in substrate binding. Catalysis depends on Tyr-58, which acts as the Proton donor. 72–74 (GAA) is a substrate binding site.

It belongs to the PanD family. Heterooctamer of four alpha and four beta subunits. Pyruvate serves as cofactor. Post-translationally, is synthesized initially as an inactive proenzyme, which is activated by self-cleavage at a specific serine bond to produce a beta-subunit with a hydroxyl group at its C-terminus and an alpha-subunit with a pyruvoyl group at its N-terminus.

It localises to the cytoplasm. It catalyses the reaction L-aspartate + H(+) = beta-alanine + CO2. Its pathway is cofactor biosynthesis; (R)-pantothenate biosynthesis; beta-alanine from L-aspartate: step 1/1. Its function is as follows. Catalyzes the pyruvoyl-dependent decarboxylation of aspartate to produce beta-alanine. This is Aspartate 1-decarboxylase from Helicobacter hepaticus (strain ATCC 51449 / 3B1).